The following is a 202-amino-acid chain: NNYCKIKCRSGIHTLCKYGTSTKPNCGKNVVKASGLTKQENLEILKQHNEFRQKVARGLETRGNPGPQPPAKSMNTLVWNDELAQIAQVWANQCNYGHDNCRNSAKYSVGQNIAEGSTSADNFVNVSNMVKMWEDEVKDYQYGSPKNKLNKVGHYTQMVWAKTKEIGCGSEDYIEDGWHRHYLVCNYGPAGNVGNEPIYERK.

4 disulfide bridges follow: Cys4–Cys16, Cys8–Cys101, Cys26–Cys94, and Cys168–Cys185. The region spanning Lys46–Tyr187 is the SCP domain.

Belongs to the CRISP family. Venom allergen 5-like subfamily. In terms of tissue distribution, expressed by the venom gland.

It is found in the secreted. The sequence is that of Venom allergen 5.02 from Vespa crabro (European hornet).